We begin with the raw amino-acid sequence, 434 residues long: RHOMBOID-like protein 9, chloroplastic (434 aa).

Residues 1–68 (MALFPLHHEV…SPRRRLCLVR (68 aa)) constitute a chloroplast transit peptide. 8 helical membrane-spanning segments follow: residues 182–202 (FYAV…EAAA), 209–229 (MGLL…ILAG), 238–258 (MFLH…LTFG), 267–287 (LFTF…MSFL), 289–309 (TADP…AWLV), 326–346 (LFQK…FGPI), 352–372 (LGAL…LQLG), and 399–419 (FLLF…IGDG).

Belongs to the peptidase S54 family.

The protein resides in the plastid. The protein localises to the chloroplast membrane. Functionally, probable rhomboid-type serine protease that catalyzes intramembrane proteolysis. The sequence is that of RHOMBOID-like protein 9, chloroplastic from Arabidopsis thaliana (Mouse-ear cress).